The following is a 165-amino-acid chain: Cyclic pyranopterin monophosphate synthase (165 aa).

Residues 83 to 85 (FCH) and 120 to 121 (ME) each bind substrate. The active site involves D135.

The protein belongs to the MoaC family. In terms of assembly, homohexamer; trimer of dimers.

The enzyme catalyses (8S)-3',8-cyclo-7,8-dihydroguanosine 5'-triphosphate = cyclic pyranopterin phosphate + diphosphate. It functions in the pathway cofactor biosynthesis; molybdopterin biosynthesis. Functionally, catalyzes the conversion of (8S)-3',8-cyclo-7,8-dihydroguanosine 5'-triphosphate to cyclic pyranopterin monophosphate (cPMP). The sequence is that of Cyclic pyranopterin monophosphate synthase from Xanthomonas axonopodis pv. citri (strain 306).